Here is a 282-residue protein sequence, read N- to C-terminus: Farnesyl diphosphate synthase (282 aa).

3 residues coordinate isopentenyl diphosphate: Lys-45, Arg-48, and His-77. Mg(2+)-binding residues include Asp-84 and Asp-90. Arg-95 serves as a coordination point for (2E)-geranyl diphosphate. Arg-96 lines the isopentenyl diphosphate pocket. Residues Lys-181, Thr-182, and Gln-220 each coordinate (2E)-geranyl diphosphate.

It belongs to the FPP/GGPP synthase family. It depends on Mg(2+) as a cofactor.

The protein localises to the cytoplasm. The catalysed reaction is isopentenyl diphosphate + (2E)-geranyl diphosphate = (2E,6E)-farnesyl diphosphate + diphosphate. This chain is Farnesyl diphosphate synthase (ispA), found in Buchnera aphidicola subsp. Acyrthosiphon pisum (strain APS) (Acyrthosiphon pisum symbiotic bacterium).